Reading from the N-terminus, the 607-residue chain is Probable Ufm1-specific protease 2 (607 aa).

Residues cysteine 440, aspartate 564, and histidine 566 contribute to the active site.

This sequence belongs to the peptidase C78 family.

Its function is as follows. Thiol protease which recognizes and hydrolyzes the peptide bond at the C-terminal Gly of UFM1, a ubiquitin-like modifier protein bound to a number of target proteins. Does not hydrolyze SUMO1 or ISG15 ubiquitin-like proteins. In Drosophila melanogaster (Fruit fly), this protein is Probable Ufm1-specific protease 2.